The primary structure comprises 171 residues: Adenine phosphoribosyltransferase (171 aa).

Belongs to the purine/pyrimidine phosphoribosyltransferase family. Homodimer.

It localises to the cytoplasm. It catalyses the reaction AMP + diphosphate = 5-phospho-alpha-D-ribose 1-diphosphate + adenine. It functions in the pathway purine metabolism; AMP biosynthesis via salvage pathway; AMP from adenine: step 1/1. Catalyzes a salvage reaction resulting in the formation of AMP, that is energically less costly than de novo synthesis. This chain is Adenine phosphoribosyltransferase, found in Rhodospirillum rubrum (strain ATCC 11170 / ATH 1.1.1 / DSM 467 / LMG 4362 / NCIMB 8255 / S1).